Here is a 331-residue protein sequence, read N- to C-terminus: NADH-cytochrome b5 reductase 2 (331 aa).

A helical transmembrane segment spans residues 36 to 56 (VGILIASAVGMAGFGTYFMFG). The 106-residue stretch at 80-185 (KGFVSLQLDD…KGPLPKYEWS (106 aa)) folds into the FAD-binding FR-type domain. FAD is bound at residue 188–223 (KHPHVAMIAGGTGITPMYQIMRAIFKNPADKTKVTL).

The protein belongs to the flavoprotein pyridine nucleotide cytochrome reductase family. FAD is required as a cofactor.

It is found in the mitochondrion outer membrane. It catalyses the reaction 2 Fe(III)-[cytochrome b5] + NADH = 2 Fe(II)-[cytochrome b5] + NAD(+) + H(+). May mediate the reduction of outer membrane cytochrome b5. The protein is NADH-cytochrome b5 reductase 2 (MCR1) of Pyricularia oryzae (strain 70-15 / ATCC MYA-4617 / FGSC 8958) (Rice blast fungus).